A 120-amino-acid polypeptide reads, in one-letter code: Ribonuclease P protein component 4 (120 aa).

The Zn(2+) site is built by cysteine 67, cysteine 70, cysteine 96, and cysteine 99.

The protein belongs to the eukaryotic/archaeal RNase P protein component 4 family. As to quaternary structure, consists of a catalytic RNA component and at least 4-5 protein subunits. Zn(2+) is required as a cofactor.

The protein resides in the cytoplasm. It catalyses the reaction Endonucleolytic cleavage of RNA, removing 5'-extranucleotides from tRNA precursor.. Its function is as follows. Part of ribonuclease P, a protein complex that generates mature tRNA molecules by cleaving their 5'-ends. The polypeptide is Ribonuclease P protein component 4 (Thermococcus sibiricus (strain DSM 12597 / MM 739)).